Consider the following 70-residue polypeptide: Antimicrobial peptide VpCT1 (70 aa).

The N-terminal stretch at 1-23 (MKNQFAVLLVALVLLQLFSQSEA) is a signal peptide. The residue at position 36 (Leu-36) is a Leucine amide. The propeptide occupies 37-70 (GKRGLRNFDLEQMDDTYEPELSEADLRYLQDLLR).

This sequence belongs to the non-disulfide-bridged peptide (NDBP) superfamily. Short antimicrobial peptide (group 4) family. In terms of tissue distribution, expressed by the venom gland.

It is found in the secreted. It localises to the target cell membrane. Functionally, antimicrobial peptide with potent activity against bacteria S.aureus (MIC=4.7 uM) and E.coli (MIC=31.5 uM), and pathogenic yeasts C.albicans (MIC=25 uM) and C.glabrata (MIC=12.5 uM). Is not very effective against P.aeruginosa (MIC=150 and &gt;300 uM). Also provokes moderate hemolysis on human erythrocytes (HC(50)=10.5 uM). The protein is Antimicrobial peptide VpCT1 of Mesomexovis punctatus (Scorpion).